Here is a 232-residue protein sequence, read N- to C-terminus: MTRPQAILTDIEGTTSSISFVKDVLFPYARRAMPAYVREHGNHPQVRHWLNQVADEIGEDVPDEVLITTLQTWIDEDRKHTALKALQGLIWGDGYKTADFTAHIYADAAIQLKAWHAAGIPLYVYSSGSVPAQKLFFAHSDAGDLSGLITDWFDTEVGPKRESASYRRIAERIGVPGPEILFLSDVIEELDAAKRAGMRTALLDRREDYPTPRSADDVGSHQRVESFSQLVL.

The protein belongs to the HAD-like hydrolase superfamily. MasA/MtnC family. In terms of assembly, monomer. Mg(2+) serves as cofactor.

The catalysed reaction is 5-methylsulfanyl-2,3-dioxopentyl phosphate + H2O = 1,2-dihydroxy-5-(methylsulfanyl)pent-1-en-3-one + phosphate. It participates in amino-acid biosynthesis; L-methionine biosynthesis via salvage pathway; L-methionine from S-methyl-5-thio-alpha-D-ribose 1-phosphate: step 3/6. Its pathway is amino-acid biosynthesis; L-methionine biosynthesis via salvage pathway; L-methionine from S-methyl-5-thio-alpha-D-ribose 1-phosphate: step 4/6. In terms of biological role, bifunctional enzyme that catalyzes the enolization of 2,3-diketo-5-methylthiopentyl-1-phosphate (DK-MTP-1-P) into the intermediate 2-hydroxy-3-keto-5-methylthiopentenyl-1-phosphate (HK-MTPenyl-1-P), which is then dephosphorylated to form the acireductone 1,2-dihydroxy-3-keto-5-methylthiopentene (DHK-MTPene). The protein is Enolase-phosphatase E1 of Xanthomonas euvesicatoria pv. vesicatoria (strain 85-10) (Xanthomonas campestris pv. vesicatoria).